The primary structure comprises 123 residues: Glycophorin-B (123 aa).

Positions 1-19 (MYGKIIFVLLLSEIVSISA) are cleaved as a signal peptide. Residues 93 to 113 (VVIILIILCVMAGVIGTILLI) form a helical membrane-spanning segment.

It belongs to the glycophorin-A family. Component of the ankyrin-1 complex in the erythrocyte, composed of ANK1, RHCE, RHAG, SLC4A1, EPB42, GYPA, GYPB and AQP1. Interacts (via the N-terminal) with RHAG; this interaction bridges the (RHAG)2(RHCE) heterotrimer with the SLC4A1 Band 3 I dimer complexed with GYPA. Post-translationally, the N-terminal extracellular domain is heavily glycosylated on serine and threonine residues.

Its subcellular location is the cell membrane. In terms of biological role, component of the ankyrin-1 complex, a multiprotein complex involved in the stability and shape of the erythrocyte membrane. This chain is Glycophorin-B, found in Pan troglodytes (Chimpanzee).